The sequence spans 198 residues: Peptidyl-tRNA hydrolase (198 aa).

Position 15 (tyrosine 15) interacts with tRNA. Histidine 20 serves as the catalytic Proton acceptor. Positions 66, 68, and 114 each coordinate tRNA.

Belongs to the PTH family. As to quaternary structure, monomer.

The protein resides in the cytoplasm. The enzyme catalyses an N-acyl-L-alpha-aminoacyl-tRNA + H2O = an N-acyl-L-amino acid + a tRNA + H(+). Its function is as follows. Hydrolyzes ribosome-free peptidyl-tRNAs (with 1 or more amino acids incorporated), which drop off the ribosome during protein synthesis, or as a result of ribosome stalling. In terms of biological role, catalyzes the release of premature peptidyl moieties from peptidyl-tRNA molecules trapped in stalled 50S ribosomal subunits, and thus maintains levels of free tRNAs and 50S ribosomes. In Cupriavidus necator (strain ATCC 17699 / DSM 428 / KCTC 22496 / NCIMB 10442 / H16 / Stanier 337) (Ralstonia eutropha), this protein is Peptidyl-tRNA hydrolase.